A 288-amino-acid polypeptide reads, in one-letter code: Small ribosomal subunit protein uS2 (288 aa).

The segment at 267–288 (EEVEEVEEEFIPSEIEDEDEKF) is disordered.

Belongs to the universal ribosomal protein uS2 family.

This Petrotoga mobilis (strain DSM 10674 / SJ95) protein is Small ribosomal subunit protein uS2.